Here is a 305-residue protein sequence, read N- to C-terminus: MNMQEVYEYLSTVLPEGHVKQDEMLKNHTHIKVGGKADVFVAPTNYDEIQEVIKYANKYNIPVTFLGNGSNVIIKDGGIRGITVSLIHITGVTVTGTTIVAQCGAAIIDVSRIALDHNLTGLEFACGIPGSVGGALYMNAGAYGGEISFVLTEAVVMTGDGELRTLTKEAFEFGYRKSVFANNHYIILEARFELEEGVYEEIKAKMDDLTFKRESKQPLEYPSCGSVFKRPPNNFAGKLIQESGLQGKRIGGVEVSLKHAGFMVNVDNGTAQDYIDLIHFVQKTVEEKFGVKLEREVRIIGEDKE.

The region spanning 33–197 is the FAD-binding PCMH-type domain; that stretch reads VGGKADVFVA…LEARFELEEG (165 aa). Arg-176 is an active-site residue. Catalysis depends on Ser-226, which acts as the Proton donor. Glu-296 is an active-site residue.

It belongs to the MurB family. It depends on FAD as a cofactor.

The protein resides in the cytoplasm. The enzyme catalyses UDP-N-acetyl-alpha-D-muramate + NADP(+) = UDP-N-acetyl-3-O-(1-carboxyvinyl)-alpha-D-glucosamine + NADPH + H(+). The protein operates within cell wall biogenesis; peptidoglycan biosynthesis. Its function is as follows. Cell wall formation. This is UDP-N-acetylenolpyruvoylglucosamine reductase 2 (murB2) from Bacillus anthracis.